A 483-amino-acid chain; its full sequence is Acetyltransferase AOL_s00215g273 (483 aa).

The next 8 helical transmembrane spans lie at 9-29, 33-53, 141-161, 191-211, 292-312, 334-354, 372-392, and 453-473; these read ALIG…TSFV, IYPL…TEGL, VAYI…LYTC, IFQM…SVLV, FLVF…VYYG, VTGY…FICW, WFVG…VLWI, and LGGY…GSGF.

It belongs to the wax synthase family.

It is found in the membrane. It functions in the pathway secondary metabolite biosynthesis; terpenoid biosynthesis. Its function is as follows. Acetyltransferase; part of the gene cluster that mediates the biosynthesis of sesquiterpenyl epoxy-cyclohexenoids (SECs) such as anthrobotrisins and arthrosporols, metabolites that possess a novel hybrid carbon skeleton consisting of a polyketide-derived epoxycyclohexenol combined with a terpenoid-derived monocyclic sesquiterpenol substructure (PKS-PTS hybrid). The SEC pathway plays an important role for fungal soil colonization via decreasing fungal nematode-capturing ability. The role of the acetyltransferase in SEC biosynthesis has still to be determined. The pathway begins with the biosynthesis of 6-methylsalicylic acid (6-MSA), the first precursor of the polyketide-derived epoxycyclohexenol in arthrosporols, by the polyketide synthase (PKS) AOL_s00215g283 via condensation of 1 acetate and 3 malonate units. The 6-methylsalicylic acid decarboxylase AOL_s00215g281 then catalyzes the decarboxylation of 6-methylsalicylic acid to yield m-cresol. The cytochrome P450 monooxygenase AOL_s00215g282 further oxidizes m-cresol to yield toluquinol. With the assistance of the oxidoreductase AOL_s00215g277, the polyprenyl transferase AOL_s00215g276 catalyzes the farnesylation of toluquinol to produce farnesyl hydroquinone, the hybrid precursor for biosynthesis of SECs. Farnesyl hydroquinone undergoes epoxidation and then subsequent dehydrogenation to form farnesyl epoxy-quinone, the first and simplest SEC. The cytochrome P450 monooxygenase AOL_s00215g278 and the FAD-dependent monooxygenase AOL_s00215g279 might be involved in the oxygenation of the phenol moiety, most likely in the epoxy formation. The cytochrome P450 monooxygenases AOL_s00215g274 and AOL_s00215g280 are involved in specific regional ketone reductions at respectively C-4 and C-1 of farnesyl epoxy-quinone PubMed:33823587. This chain is Acetyltransferase AOL_s00215g273, found in Arthrobotrys oligospora (strain ATCC 24927 / CBS 115.81 / DSM 1491) (Nematode-trapping fungus).